The following is a 395-amino-acid chain: Elongation factor Tu (395 aa).

Residues 10 to 204 (KPHVNIGTIG…AVDEYIPTPQ (195 aa)) enclose the tr-type G domain. The G1 stretch occupies residues 19–26 (GHVDHGKT). 19 to 26 (GHVDHGKT) provides a ligand contact to GTP. Residue Thr-26 participates in Mg(2+) binding. The segment at 60-64 (GITIS) is G2. Positions 81–84 (DCPG) are G3. GTP is bound by residues 81 to 85 (DCPGH) and 136 to 139 (NKCD). Residues 136–139 (NKCD) are G4. Positions 174 to 176 (SAL) are G5.

The protein belongs to the TRAFAC class translation factor GTPase superfamily. Classic translation factor GTPase family. EF-Tu/EF-1A subfamily. Monomer.

The protein localises to the cytoplasm. The catalysed reaction is GTP + H2O = GDP + phosphate + H(+). In terms of biological role, GTP hydrolase that promotes the GTP-dependent binding of aminoacyl-tRNA to the A-site of ribosomes during protein biosynthesis. The polypeptide is Elongation factor Tu (Geobacillus sp. (strain WCH70)).